A 745-amino-acid polypeptide reads, in one-letter code: Interleukin-17 receptor D (745 aa).

Residues 1–26 (MAGSRRLAHFFMASCLFLCYTASVNG) form the signal peptide. Over 27-298 (GKRGNSDKCS…VHSPWAGPIR (272 aa)) the chain is Extracellular. 6 N-linked (GlcNAc...) asparagine glycosylation sites follow: Asn61, Asn79, Asn136, Asn170, Asn205, and Asn276. The chain crosses the membrane as a helical span at residues 299–319 (AMAITVPLVIMSAFATLFTVM). Residues 320–745 (CRKKQQENIY…SEGLIAAAST (426 aa)) lie on the Cytoplasmic side of the membrane. The region spanning 354 to 518 (RPKIFICYSS…LMDQLPQLFA (165 aa)) is the SEFIR domain. Disordered regions lie at residues 432–454 (RHRKGKATSKEKNREPSASDSSS) and 631–713 (REDL…PPAV). Residues 439-448 (TSKEKNREPS) show a composition bias toward basic and acidic residues. Low complexity predominate over residues 693 to 705 (SSLADSVSSSSGL).

As to quaternary structure, interacts with fgfr1 and fgfr2.

Its subcellular location is the membrane. In terms of biological role, feedback inhibitor of fibroblast growth factor mediated Ras-MAPK signaling and ERK activation. May inhibit FGF-induced FGFR1 tyrosine phosphorylation. This is Interleukin-17 receptor D (il17rd) from Danio rerio (Zebrafish).